The chain runs to 745 residues: Junction plakoglobin (745 aa).

Position 1 is an N-acetylmethionine (M1). A glycan (O-linked (GlcNAc) threonine) is linked at T14. Residues S99 and S125 each carry the phosphoserine modification. ARM repeat units lie at residues N132–K171, K172–H215, R216–L255, E258–Y297, G298–C341, P342–D381, A383–C420, S423–S464, E470–L510, P512–T551, P574–Q613, and K615–R661. The interaction with DSC1 and DSG1 stretch occupies residues N132–Y297. A Phosphoserine modification is found at S182. An interaction with DSC1 region spans residues P574 to R661. Phosphoserine is present on residues S665 and S730.

It belongs to the beta-catenin family. In terms of assembly, homodimer. Component of an E-cadherin/catenin adhesion complex composed of at least E-cadherin/CDH1 and gamma-catenin/JUP, and possibly alpha-catenin/CTNNA1; the complex is located to adherens junctions. The stable association of CTNNA1 is controversial as CTNNA1 was shown not to bind to F-actin when assembled in the complex. Interacts with MUC1. Interacts with CAV1. Interacts with PTPRJ. Interacts with DSG1. Interacts with DSC1 and DSC2. Interacts with PKP2. Interacts with PKP3 (via N-terminus); the interaction is required for PKP3 localization to desmosome cell-cell junctions. Interacts with DSG4. In terms of processing, may be phosphorylated by FER. As to expression, expressed in the heart (at protein level).

The protein resides in the cell junction. Its subcellular location is the adherens junction. It is found in the desmosome. It localises to the cytoplasm. The protein localises to the cytoskeleton. The protein resides in the cell membrane. Its subcellular location is the nucleus. Its function is as follows. Common junctional plaque protein. The membrane-associated plaques are architectural elements in an important strategic position to influence the arrangement and function of both the cytoskeleton and the cells within the tissue. The presence of plakoglobin in both the desmosomes and in the intermediate junctions suggests that it plays a central role in the structure and function of submembranous plaques. Acts as a substrate for VE-PTP and is required by it to stimulate VE-cadherin function in endothelial cells. Can replace beta-catenin in E-cadherin/catenin adhesion complexes which are proposed to couple cadherins to the actin cytoskeleton. The protein is Junction plakoglobin of Rattus norvegicus (Rat).